A 393-amino-acid polypeptide reads, in one-letter code: Phosphoglycerate kinase (393 aa).

Residues 21–23 (DIN), arginine 36, 59–62 (HFGR), arginine 114, and arginine 147 contribute to the substrate site. Residues lysine 197, glutamate 319, and 349-352 (GGDT) contribute to the ATP site.

This sequence belongs to the phosphoglycerate kinase family. As to quaternary structure, monomer.

The protein localises to the cytoplasm. The catalysed reaction is (2R)-3-phosphoglycerate + ATP = (2R)-3-phospho-glyceroyl phosphate + ADP. It functions in the pathway carbohydrate degradation; glycolysis; pyruvate from D-glyceraldehyde 3-phosphate: step 2/5. The polypeptide is Phosphoglycerate kinase (Dinoroseobacter shibae (strain DSM 16493 / NCIMB 14021 / DFL 12)).